The sequence spans 379 residues: MATCPVLQKETLFQTGDYAYRIPALIYLSKQKTLLAFAEKRLTKTDEHADLFVLRRGSYNADTHQVQWQAEEVVTQAYLEGHRSMSPCPLYDKQTRTLFLFFIAVRGQISEHHQLQTGVNVTRLCHITSTDHGKTWSAVQDLTDTTIGSTHQDWATFGVGPGHCLQLRNTAGSLLVPAYAYRKQPPIHAPAPSAFCFLSHDHGSTWELGHFVSQNSLECQVAEVGTGAERVVYLNARSCLGARVQAQSPNSGLDFQDNQVVSKLVEPPKGCHGSVIAFPNPTSKADALDVWLLYTHPTDSRKRTNLGVYLNQKPLDPTTWSAPTLLATGICAYSDLQNMGHGPDGSPQFGCLYESNNYEEIVFLMFTLKQAFPAVFGAQ.

Residues 20–23 carry the FRIP motif motif; it reads YRIP. Residues arginine 21 and arginine 41 each contribute to the substrate site. The Proton acceptor role is filled by aspartate 46. A BNR 1 repeat occupies 127–138; sequence ITSTDHGKTWSA. Positions 179 and 181 each coordinate substrate. Residues 197 to 208 form a BNR 2 repeat; the sequence is FLSHDHGSTWEL. Residues glutamate 218, arginine 237, and arginine 303 each contribute to the substrate site. Catalysis depends on tyrosine 333, which acts as the Nucleophile. Glutamate 354 is a catalytic residue.

Belongs to the glycosyl hydrolase 33 family.

Its subcellular location is the cytoplasm. It carries out the reaction Hydrolysis of alpha-(2-&gt;3)-, alpha-(2-&gt;6)-, alpha-(2-&gt;8)- glycosidic linkages of terminal sialic acid residues in oligosaccharides, glycoproteins, glycolipids, colominic acid and synthetic substrates.. Functionally, catalyzes the removal of sialic acid (N-acetylneuraminic acid) moieties from glycoproteins, oligosaccharides and gangliosides. This is Sialidase-2 (NEU2) from Cricetulus griseus (Chinese hamster).